A 1382-amino-acid chain; its full sequence is Hepatocyte growth factor receptor (1382 aa).

An N-terminal signal peptide occupies residues 1 to 24 (MKAPAVLAPGILVLLFTLVPRSHG). The Extracellular segment spans residues 25–933 (ECKEALVKSE…VIVQPDQNFM (909 aa)). The region spanning 27 to 516 (KEALVKSEMN…TGNKITKIPL (490 aa)) is the Sema domain. N-linked (GlcNAc...) asparagine glycosylation occurs at N45. 4 disulfides stabilise this stretch: C95-C101, C98-C160, C133-C141, and C173-C176. N106 carries N-linked (GlcNAc...) asparagine glycosylation. N-linked (GlcNAc...) asparagine glycans are attached at residues N203 and N359. Intrachain disulfides connect C299–C364 and C386–C398. N-linked (GlcNAc...) asparagine glycosylation is found at N400 and N406. 4 cysteine pairs are disulfide-bonded: C521/C539, C527/C562, C530/C546, and C542/C552. IPT/TIG domains are found at residues 564 to 656 (PAIY…FSYV), 658 to 740 (PVIT…FSYR), and 743 to 837 (PIVD…LTYV). Residue T583 is glycosylated (O-linked (Man) threonine). Residues N608, N614, and N636 are each glycosylated (N-linked (GlcNAc...) asparagine). T677 and T762 each carry an O-linked (Man) threonine glycan. N-linked (GlcNAc...) asparagine glycosylation is found at N786 and N880. Residues 934-956 (GLIVGGVSISIILLLLLGLFLWL) traverse the membrane as a helical segment. Residues 957-1382 (KKKKRIKDLG…QDNVDGTVDT (426 aa)) lie on the Cytoplasmic side of the membrane. S967 is modified (phosphoserine). T978 carries the phosphothreonine modification. Phosphoserine occurs at positions 991, 998, and 1001. Y1004 is subject to Phosphotyrosine. The Protein kinase domain maps to 1079-1346 (VHFSEVIGRG…RISTIFSTFI (268 aa)). Residues 1085–1093 (IGRGHFGCV) and K1111 contribute to the ATP site. D1205 serves as the catalytic Proton acceptor. Residues 1213–1382 (LDEKFTVKVA…QDNVDGTVDT (170 aa)) are interaction with RANBP9. Y1231 is subject to Phosphotyrosine. Residues Y1235 and Y1236 each carry the phosphotyrosine; by autocatalysis modification. T1290 bears the Phosphothreonine mark. Residues 1321–1360 (WHPKAEMRPSFSELVSRISTIFSTFIGEHYVHVNATYVNV) form an interaction with MUC20 region. Phosphotyrosine; by autocatalysis is present on residues Y1350 and Y1357. Phosphotyrosine is present on Y1366.

Belongs to the protein kinase superfamily. Tyr protein kinase family. Heterodimer made of an alpha chain (50 kDa) and a beta chain (145 kDa) which are disulfide linked. Binds PLXNB1. Interacts when phosphorylated with downstream effectors including STAT3, PIK3R1, SRC, PCLG1, GRB2 and GAB1. Interacts with SPSB1, SPSB2 and SPSB4. Interacts with INPP5D/SHIP1. When phosphorylated at Tyr-1357, interacts with INPPL1/SHIP2. Interacts with RANBP9 and RANBP10, as well as SPSB1, SPSB2, SPSB3 and SPSB4. SPSB1 binding occurs in the presence and in the absence of HGF, however HGF treatment has a positive effect on this interaction. Interacts with MUC20; prevents interaction with GRB2 and suppresses hepatocyte growth factor-induced cell proliferation. Interacts with GRB10. Interacts with PTPN1 and PTPN2. Interacts with HSP90AA1 and HSP90AB1; the interaction suppresses MET kinase activity. Interacts with tensin TNS3. Interacts (when phosphorylated) with tensin TNS4 (via SH2 domain); the interaction increases MET protein stability by inhibiting MET endocytosis and subsequent lysosomal degradation. In terms of processing, autophosphorylated in response to ligand binding on Tyr-1235 and Tyr-1236 in the kinase domain leading to further phosphorylation of Tyr-1350 and Tyr-1357 in the C-terminal multifunctional docking site. Dephosphorylated by PTPRJ at Tyr-1350 and Tyr-1366. Dephosphorylated by PTPN1 and PTPN2. Post-translationally, ubiquitinated. Ubiquitination by CBL regulates the receptor stability and activity through proteasomal degradation. O-mannosylation of IPT/TIG domains by TMEM260 is required for protein maturation. O-mannosylated residues are composed of single mannose glycans that are not elongated or modified.

It is found in the membrane. The enzyme catalyses L-tyrosyl-[protein] + ATP = O-phospho-L-tyrosyl-[protein] + ADP + H(+). With respect to regulation, in its inactive state, the C-terminal tail interacts with the catalytic domain and inhibits the kinase activity. Upon ligand binding, the C-terminal tail is displaced and becomes phosphorylated, thus increasing the kinase activity. Receptor tyrosine kinase that transduces signals from the extracellular matrix into the cytoplasm by binding to hepatocyte growth factor/HGF ligand. Regulates many physiological processes including proliferation, scattering, morphogenesis and survival. Ligand binding at the cell surface induces autophosphorylation of MET on its intracellular domain that provides docking sites for downstream signaling molecules. Following activation by ligand, interacts with the PI3-kinase subunit PIK3R1, PLCG1, SRC, GRB2, STAT3 or the adapter GAB1. Recruitment of these downstream effectors by MET leads to the activation of several signaling cascades including the RAS-ERK, PI3 kinase-AKT, or PLCgamma-PKC. The RAS-ERK activation is associated with the morphogenetic effects while PI3K/AKT coordinates prosurvival effects. During embryonic development, MET signaling plays a role in gastrulation, development and migration of muscles and neuronal precursors, angiogenesis and kidney formation. In adults, participates in wound healing as well as organ regeneration and tissue remodeling. Also promotes differentiation and proliferation of hematopoietic cells. The sequence is that of Hepatocyte growth factor receptor (MET) from Oryctolagus cuniculus (Rabbit).